Here is a 750-residue protein sequence, read N- to C-terminus: MMRQYELVERVQRYKPDVNEALLNKAYVYAMQKHGSQKRASGDPYFSHPLEVAAILTDMHLDEATIAIALLHDTIEDTTATRQEIDQLFGPEIGKLVEGLTKLKKLDLVSKKAVQAENLRKLLLAISEDVRVLLVKLADRLHNMRTLGVMCEDKRLRIAEETMDIYAPLAGRMGMQDMREELEELAFRYINPDAWRAVTDRLAELLEKNRGLLQKIETDLSEIFEKNGIKASVKSRQKKPWSVFRKMETKGLSFEQLSDIFGFRVMVDTVQDCYRALGLIHTTWSMVPGRFKDYISTPKQNDYRSIHTTIIGPSRQRIELQIRTREMDEIAEFGVAAHSIYKDRGSANNPHKISTETNAYAWLRQTIEQLSEGDNPEEFLEHTKLELFQDQVFCFTPKGRLIALPRGATPIDFAYAVHTDIGDSCVGAKVNGRIMPLMTELKNGDEVDIIRSKAQVPPAAWESLVATGKARAAIRRATRSAVRKQYSGLGMRILERAFERAGKPFSKDILKPGLPRLARKDVEDVLAAVGRGELPSTDVVKAVYPDYQDTRVTTQNNPAKAGEKGWFNIQNAAGMIFKVPEGGEGAAAKVDPAATTPKPGKRALPIRGTNPDLPVRFAPEGAVPGDRIVGILQPGAGITIYPIQSPALTAYDDQPERWIDVRWDIDDQMSERFPARISVSAINSPGSLAKIAQIAAANDANIHNLSMVRTAPDFTEMIIDVEVWDLKHLNRIISQLKESASVSSAKRVNG.

The region spanning 45–144 is the HD domain; that stretch reads YFSHPLEVAA…VKLADRLHNM (100 aa). The TGS domain occupies 390–451; it reads DQVFCFTPKG…KNGDEVDIIR (62 aa). The interval 587–613 is disordered; sequence AAKVDPAATTPKPGKRALPIRGTNPDL. Residues 676 to 750 form the ACT domain; the sequence is RISVSAINSP…SVSSAKRVNG (75 aa).

It belongs to the RelA/SpoT family.

The enzyme catalyses GTP + ATP = guanosine 3'-diphosphate 5'-triphosphate + AMP. Functions as a (p)ppGpp synthase. In eubacteria ppGpp (guanosine 3'-diphosphate 5'-diphosphate) is a mediator of the stringent response that coordinates a variety of cellular activities in response to changes in nutritional abundance. It is necessary for persistence in mice, essential for intracellular growth of Brucella and required for expression of the type IV secretion system VirB and therefore plays a role in adaptation of Brucella to its intracellular host environment. The protein is GTP pyrophosphokinase rsh (rsh) of Brucella suis biovar 1 (strain 1330).